A 61-amino-acid chain; its full sequence is Metallothionein-1A (61 aa).

Methionine 1 is subject to N-acetylmethionine. The tract at residues 1-29 is beta; that stretch reads MDPNCSCPTGGSCSCAGSCTCKACRCTSC. Residues cysteine 5, cysteine 7, cysteine 13, cysteine 15, cysteine 19, cysteine 21, cysteine 24, cysteine 26, cysteine 29, cysteine 33, cysteine 34, cysteine 36, cysteine 37, cysteine 41, cysteine 44, cysteine 48, cysteine 50, and cysteine 57 each contribute to the a divalent metal cation site. The interval 30–61 is alpha; the sequence is KKSCCSCCPAGCARCAQGCICKGASDKCSCCA. Serine 58 is subject to Phosphoserine. The a divalent metal cation site is built by cysteine 59 and cysteine 60.

It belongs to the metallothionein superfamily. Type 1 family. In terms of assembly, monomer.

In terms of biological role, metallothioneins have a high content of cysteine residues that bind various heavy metals; these proteins are transcriptionally regulated by both heavy metals and glucocorticoids. This is Metallothionein-1A (MT1A) from Sus scrofa (Pig).